A 476-amino-acid chain; its full sequence is UDP-N-acetylmuramate--L-alanine ligase (476 aa).

115 to 121 (GTHGKTT) lines the ATP pocket.

This sequence belongs to the MurCDEF family.

It is found in the cytoplasm. The enzyme catalyses UDP-N-acetyl-alpha-D-muramate + L-alanine + ATP = UDP-N-acetyl-alpha-D-muramoyl-L-alanine + ADP + phosphate + H(+). It functions in the pathway cell wall biogenesis; peptidoglycan biosynthesis. Its function is as follows. Cell wall formation. The protein is UDP-N-acetylmuramate--L-alanine ligase of Paramagnetospirillum magneticum (strain ATCC 700264 / AMB-1) (Magnetospirillum magneticum).